The following is a 740-amino-acid chain: MEKLGVEPEEEGGGDDDEEDAEAWAMELADVGAAASSQGVHDQVLPTPNASSRVIVHVDLDCFYAQVEMISNPELKDKPLGVQQKYLVVTCNYEARKLGVKKLMNVRDAKEKCPQLVLVNGEDLTRYREMSYKVTELLEEFSPVVERLGFDENFVDLTEMVEKRLQQLQSDELSAVTVSGHVYNNQSINLLDVLHIRLLVGSQIAAEMREAMYNQLGLTGCAGVASNKLLAKLVSGVFKPNQQTVLLPESCQHLIHSLNHIKEIPGIGYKTAKCLEALGINSVRDLQTFSPKILEKELGISVAQRIQKLSFGEDNSPVILSGPPQSFSEEDSFKKCSSEVEAKNKIEELLASLLNRVCQDGRKPHTVRLIIRRYSSEKHYGRESRQCPIPSHVIQKLGTGNYDVMTPMVDILMKLFRNMVNVKMPFHLTLLSVCFCNLKALNTAKKGLIDYYLMPSLSTTSRSGKHSFKMKDTHMEDFPKDKETNRDFLPSGRIESTRTRESPLDTTNFSKEKDINEFPLCSLPEGVDQEVFKQLPVDIQEEILSGKSREKFQGKGSVSCPLHASRGVLSFFSKKQMQDIPINPRDHLSSSKQVSSVSPCEPGTSGFNSSSSSYMSSQKDYSYYLDNRLKDERISQGPKEPQGFHFTNSNPAVSAFHSFPNLQSEQLFSRNHTTDSHKQTVATDSHEGLTENREPDSVDEKITFPSDIDPQVFYELPEAVQKELLAEWKRAGSDFHIGHK.

The disordered stretch occupies residues 1 to 21; the sequence is MEKLGVEPEEEGGGDDDEEDA. Residues 7–21 are compositionally biased toward acidic residues; it reads EPEEEGGGDDDEEDA. In terms of domain architecture, UmuC spans 55 to 268; the sequence is IVHVDLDCFY…NHIKEIPGIG (214 aa). The Mg(2+) site is built by Asp-59 and Leu-60. Mn(2+) contacts are provided by Asp-59 and Leu-60. Residues Tyr-64 and Arg-96 each contribute to the a 2'-deoxyribonucleoside 5'-triphosphate site. Residue Asp-151 participates in Mg(2+) binding. Asp-151 contributes to the Mn(2+) binding site. Glu-152 acts as the Proton acceptor in catalysis. 2 DNA-binding regions span residues 249–314 and 325–439; these read ESCQ…FGED and QSFS…CNLK. Positions 527-544 match the Ubiquitin-binding 1 (UBM1) motif; it reads VDQEVFKQLPVDIQEEIL. 2 disordered regions span residues 581–615 and 671–704; these read PINP…SSYM and NHTT…KITF. The segment covering 605-615 has biased composition (low complexity); the sequence is SGFNSSSSSYM. Residues 672–702 are compositionally biased toward basic and acidic residues; it reads HTTDSHKQTVATDSHEGLTENREPDSVDEKI. The Ubiquitin-binding 2 (UBM2) motif lies at 708–725; that stretch reads IDPQVFYELPEAVQKELL.

It belongs to the DNA polymerase type-Y family. As to quaternary structure, interacts with POLH. Interacts with REV1. Interacts with ubiquitin. Mg(2+) serves as cofactor. It depends on Mn(2+) as a cofactor. Monoubiquitinated. Protein monoubiquitination prevents POLI binding to ubiquitin via the ubiquitin-binding motif 1 and ubiquitin-binding motif 2. Ubiquitous. Highly expressed in testis.

It is found in the nucleus. The catalysed reaction is DNA(n) + a 2'-deoxyribonucleoside 5'-triphosphate = DNA(n+1) + diphosphate. Its function is as follows. Error-prone DNA polymerase specifically involved in DNA repair. Plays an important role in translesion synthesis, where the normal high-fidelity DNA polymerases cannot proceed and DNA synthesis stalls. Favors Hoogsteen base-pairing in the active site. Inserts the correct base with high-fidelity opposite an adenosine template. Exhibits low fidelity and efficiency opposite a thymidine template, where it will preferentially insert guanosine. May play a role in hypermutation of immunoglobulin genes. Forms a Schiff base with 5'-deoxyribose phosphate at abasic sites, but may not have lyase activity. The chain is DNA polymerase iota (POLI) from Homo sapiens (Human).